Reading from the N-terminus, the 288-residue chain is Homoserine kinase (288 aa).

78 to 88 (PLARGLGSSSS) is an ATP binding site.

It belongs to the GHMP kinase family. Homoserine kinase subfamily.

The protein resides in the cytoplasm. The enzyme catalyses L-homoserine + ATP = O-phospho-L-homoserine + ADP + H(+). It participates in amino-acid biosynthesis; L-threonine biosynthesis; L-threonine from L-aspartate: step 4/5. Functionally, catalyzes the ATP-dependent phosphorylation of L-homoserine to L-homoserine phosphate. The protein is Homoserine kinase of Streptococcus agalactiae serotype V (strain ATCC BAA-611 / 2603 V/R).